The following is a 529-amino-acid chain: Delayed-rectifier potassium channel regulatory subunit KCNS1 (529 aa).

Topologically, residues 1 to 217 (MLMLLVRGTH…LTMENPGYSL (217 aa)) are cytoplasmic. The chain crosses the membrane as a helical span at residues 218–239 (PSKLFSCVSISVVLASIAAMCI). The Extracellular portion of the chain corresponds to 240–270 (HSLPEYQAREAAAAVAAVAAGRSPEGVRDDP). Residues 271-293 (VLRRLEYFCIAWFSFEVSSRLLL) form a helical membrane-spanning segment. The Cytoplasmic segment spans residues 294 to 304 (APSTRNFFCHP). Residues 305–322 (LNLIDIVSVLPFYLTLLA) form a helical membrane-spanning segment. Over 323–340 (GVALGDQGGTGGKELGHL) the chain is Extracellular. Residues 341 to 361 (GKVVQVFRLMRIFRVLKLARH) form a helical; Voltage-sensor membrane-spanning segment. Over 362-376 (STGLRSLGATLKHSY) the chain is Cytoplasmic. The chain crosses the membrane as a helical span at residues 377–398 (REVGILLLYLAVGVSVFSGVAY). Residues 399–411 (TAEKEEDVGFNTI) are Extracellular-facing. The helical intramembrane region spans 412–423 (PACWWWGTVSMT). Residues 424–429 (TVGYGD) carry the Selectivity filter motif. Residues 424-431 (TVGYGDVV) lie within the membrane without spanning it. Residues 432–438 (PVTVAGK) are Extracellular-facing. A helical membrane pass occupies residues 439–467 (LAASGCILGGILVVALPITIIFNKFSHFY). The Cytoplasmic segment spans residues 468–529 (RRQKALEAAV…PSEPPHPQMY (62 aa)). Residues 496–529 (SEASLETSRETSQEGRSADLETQAPSEPPHPQMY) form a disordered region. Residues 502-514 (TSRETSQEGRSAD) are compositionally biased toward basic and acidic residues.

Belongs to the potassium channel family. S (TC 1.A.1.2) subfamily. Kv9.1/KCNS1 sub-subfamily. In terms of assembly, heterotetramer with KCNB1. Heterotetramer with KCNB2. Does not form homomultimers.

The protein resides in the cell membrane. In terms of biological role, potassium channel regulatory subunit that modulate the delayed rectifier voltage-gated potassium channel activity of KCNB1 and KCNB2 by altering their kinetics, expression levels, and shifting the half-inactivation potential to more polarized values. While it does not form functional channels on its own, it can form functional heterotetrameric channels with KCNB1 and KCNB2. Each regulatory subunit has unique regulatory properties that can lead to extensive inhibition, significant changes in kinetics, and/or substantial shifts in the voltage dependencies of the inactivation process. The protein is Delayed-rectifier potassium channel regulatory subunit KCNS1 of Papio anubis (Olive baboon).